The chain runs to 283 residues: Acetylglutamate kinase (283 aa).

Substrate contacts are provided by residues 64-65 (GG), R86, and N178.

The protein belongs to the acetylglutamate kinase family. ArgB subfamily.

The protein localises to the cytoplasm. It carries out the reaction N-acetyl-L-glutamate + ATP = N-acetyl-L-glutamyl 5-phosphate + ADP. The protein operates within amino-acid biosynthesis; L-arginine biosynthesis; N(2)-acetyl-L-ornithine from L-glutamate: step 2/4. Catalyzes the ATP-dependent phosphorylation of N-acetyl-L-glutamate. This Lactococcus lactis subsp. cremoris (strain SK11) protein is Acetylglutamate kinase.